A 60-amino-acid polypeptide reads, in one-letter code: Metallothionein (60 aa).

Residues 1–28 are beta; the sequence is MDPCECSKTGKCSCGGSCTCTNCSCTSC. A divalent metal cation-binding residues include Cys-4, Cys-6, Cys-12, Cys-14, Cys-18, Cys-20, Cys-23, Cys-25, Cys-28, Cys-32, Cys-33, Cys-35, Cys-36, Cys-40, Cys-43, Cys-47, Cys-49, Cys-54, Cys-58, and Cys-59. Residues 29–60 are alpha; the sequence is KKSCCPCCPSGCSKCASGCVCKGKTCDTSCCQ.

The protein belongs to the metallothionein superfamily. Type 1 family.

In terms of biological role, metallothioneins have a high content of cysteine residues that bind various heavy metals. The sequence is that of Metallothionein (mt) from Chelon auratus (Golden grey mullet).